The chain runs to 117 residues: Large ribosomal subunit protein uL18 (117 aa).

It belongs to the universal ribosomal protein uL18 family. As to quaternary structure, part of the 50S ribosomal subunit; part of the 5S rRNA/L5/L18/L25 subcomplex. Contacts the 5S and 23S rRNAs.

Its function is as follows. This is one of the proteins that bind and probably mediate the attachment of the 5S RNA into the large ribosomal subunit, where it forms part of the central protuberance. The sequence is that of Large ribosomal subunit protein uL18 from Pectobacterium carotovorum subsp. carotovorum (strain PC1).